Reading from the N-terminus, the 249-residue chain is ATP synthase subunit a, chloroplastic (249 aa).

The next 5 membrane-spanning stretches (helical) occupy residues 38–58 (AQVLITSWIVIAILLSLAVLA), 97–117 (VPFIGTMFLFIFVSNWSGALL), 136–156 (INTTVALALLTSVAYFYAGLH), 201–221 (LVVAVLISLVPLVVPIPMMFL), and 222–242 (GLFTSAIQALIFATLAAAYIG).

It belongs to the ATPase A chain family. As to quaternary structure, F-type ATPases have 2 components, CF(1) - the catalytic core - and CF(0) - the membrane proton channel. CF(1) has five subunits: alpha(3), beta(3), gamma(1), delta(1), epsilon(1). CF(0) has four main subunits: a, b, b' and c.

Its subcellular location is the plastid. It is found in the chloroplast thylakoid membrane. In terms of biological role, key component of the proton channel; it plays a direct role in the translocation of protons across the membrane. This chain is ATP synthase subunit a, chloroplastic, found in Physcomitrium patens (Spreading-leaved earth moss).